The primary structure comprises 262 residues: LysM and putative peptidoglycan-binding domain-containing protein 3 (262 aa).

Residues 1 to 218 are Extracellular-facing; it reads MSGRIPNHGY…PYHGADWSLG (218 aa). Residues 70-114 form the LysM domain; that stretch reads ISRDICEGDTLNSIALQYCCTVADLKRANNFLNEQDFFALRTIKI. The helical transmembrane segment at 219 to 239 threads the bilayer; the sequence is WWTAVAIMVFVGIITPLFYFL. Topologically, residues 240–262 are cytoplasmic; sequence YYEVLMKVNTSHTLNSIEKSGPS.

The protein localises to the cell membrane. The protein resides in the golgi apparatus. In terms of biological role, essential for Golgi structural integrity. The chain is LysM and putative peptidoglycan-binding domain-containing protein 3 (lysmd3) from Xenopus tropicalis (Western clawed frog).